A 200-amino-acid chain; its full sequence is MATARPSIVGPDSGPESPFPYKMEGKVISGFGRGSKELGIPTANLPVDATISPWISSISSGVYYGWASLQLPPSHPESPSSSSCSPYVVFPMVMSIGYNPFYNNTERSAEVHILHKFTADFYDAPMRLLILGFIRDEKNYDSLEALVKDINTDCDVARTSLDRKAWVPQGGLLHPAVDVREKQGDLDGSWLVRPNDSPSA.

Residues Met-1–Pro-20 are disordered. Mg(2+)-binding residues include Thr-42 and Asn-44. Catalysis depends on Glu-110, which acts as the Nucleophile.

Belongs to the flavokinase family. Zn(2+) serves as cofactor. It depends on Mg(2+) as a cofactor.

The enzyme catalyses riboflavin + ATP = FMN + ADP + H(+). It participates in cofactor biosynthesis; FMN biosynthesis; FMN from riboflavin (ATP route): step 1/1. In terms of biological role, catalyzes the phosphorylation of riboflavin (vitamin B2) to form flavin mononucleotide (FMN) coenzyme. The chain is Riboflavin kinase (FMN1) from Pyricularia oryzae (strain 70-15 / ATCC MYA-4617 / FGSC 8958) (Rice blast fungus).